The chain runs to 239 residues: Sugar fermentation stimulation protein homolog (239 aa).

This sequence belongs to the SfsA family.

This Sinorhizobium medicae (strain WSM419) (Ensifer medicae) protein is Sugar fermentation stimulation protein homolog.